A 291-amino-acid chain; its full sequence is Pyridoxal kinase PdxY (291 aa).

Substrate is bound by residues S9 and 44–45 (TQ). ATP-binding positions include D112, V144, E149, K182, and 207 to 210 (RPHL). Substrate is bound at residue D221.

This sequence belongs to the pyridoxine kinase family. PdxY subfamily. Homodimer. It depends on Mg(2+) as a cofactor.

It catalyses the reaction pyridoxal + ATP = pyridoxal 5'-phosphate + ADP + H(+). It participates in cofactor metabolism; pyridoxal 5'-phosphate salvage; pyridoxal 5'-phosphate from pyridoxal: step 1/1. Pyridoxal kinase involved in the salvage pathway of pyridoxal 5'-phosphate (PLP). Catalyzes the phosphorylation of pyridoxal to PLP. This is Pyridoxal kinase PdxY from Photobacterium profundum (strain SS9).